The chain runs to 353 residues: Phospho-furanose lactonase (353 aa).

The Zn(2+) site is built by His-24, His-26, Lys-153, His-186, and His-214. Residue Lys-153 is modified to N6-carboxylysine. Lys-244–Tyr-245 contacts substrate. Asp-272 is a Zn(2+) binding site. Arg-275–Tyr-278 lines the substrate pocket.

This sequence belongs to the metallo-dependent hydrolases superfamily. Phosphotriesterase family. Requires Zn(2+) as cofactor.

It catalyses the reaction a 1,4-lactone + H2O = a 4-hydroxyacid + H(+). The enzyme catalyses D-xylono-1,4-lactone 5-phosphate + H2O = 5-phospho-D-xylonate + H(+). The catalysed reaction is L-arabino-1,4-lactone 5-phosphate + H2O = 5-phospho-L-arabinonate + H(+). Catalyzes the hydrolysis of D-xylono-1,4-lactone-5-phosphate and L-arabino-1,4-lactone-5-phosphate. Also able to hydrolyze carboxy 1,4-lactones. The polypeptide is Phospho-furanose lactonase (Mycoplasmopsis synoviae (strain 53) (Mycoplasma synoviae)).